Reading from the N-terminus, the 459-residue chain is UDP-N-acetylmuramate--L-alanine ligase (459 aa).

118-124 (GTHGKTT) is a binding site for ATP.

The protein belongs to the MurCDEF family.

The protein resides in the cytoplasm. It carries out the reaction UDP-N-acetyl-alpha-D-muramate + L-alanine + ATP = UDP-N-acetyl-alpha-D-muramoyl-L-alanine + ADP + phosphate + H(+). It participates in cell wall biogenesis; peptidoglycan biosynthesis. Functionally, cell wall formation. The sequence is that of UDP-N-acetylmuramate--L-alanine ligase from Agathobacter rectalis (strain ATCC 33656 / DSM 3377 / JCM 17463 / KCTC 5835 / VPI 0990) (Eubacterium rectale).